The primary structure comprises 353 residues: Phospho-N-acetylmuramoyl-pentapeptide-transferase (353 aa).

A run of 10 helical transmembrane segments spans residues 22–42, 65–85, 88–108, 129–149, 161–181, 192–212, 228–248, 256–276, 281–301, and 330–350; these read FAFFIALCLSLFLMPKFITWA, TPTMGGLIFISSAVIASLFCI, DNIFAISALLCLILFCLIGLI, LLAQIIAGLICILPLYFSSEL, PLFDMEIFAIAFWILVLISSS, GLATVPGIFSLSTLGIFLYLS, GLGEVVIICAALIGALMGFLW, VFMGDSGSLALGGFIGFLAVI, ILLLLIGFVFVLETVSVILQV, and KIIVRFWMIALLSNLLALASI.

The protein belongs to the glycosyltransferase 4 family. MraY subfamily. It depends on Mg(2+) as a cofactor.

The protein localises to the cell inner membrane. The enzyme catalyses UDP-N-acetyl-alpha-D-muramoyl-L-alanyl-gamma-D-glutamyl-meso-2,6-diaminopimeloyl-D-alanyl-D-alanine + di-trans,octa-cis-undecaprenyl phosphate = di-trans,octa-cis-undecaprenyl diphospho-N-acetyl-alpha-D-muramoyl-L-alanyl-D-glutamyl-meso-2,6-diaminopimeloyl-D-alanyl-D-alanine + UMP. It functions in the pathway cell wall biogenesis; peptidoglycan biosynthesis. Functionally, catalyzes the initial step of the lipid cycle reactions in the biosynthesis of the cell wall peptidoglycan: transfers peptidoglycan precursor phospho-MurNAc-pentapeptide from UDP-MurNAc-pentapeptide onto the lipid carrier undecaprenyl phosphate, yielding undecaprenyl-pyrophosphoryl-MurNAc-pentapeptide, known as lipid I. The chain is Phospho-N-acetylmuramoyl-pentapeptide-transferase from Campylobacter jejuni subsp. jejuni serotype O:2 (strain ATCC 700819 / NCTC 11168).